Here is a 249-residue protein sequence, read N- to C-terminus: General transcription factor IIF subunit 2 (249 aa).

Alanine 2 is modified (N-acetylalanine). Residues lysine 22, lysine 33, and lysine 137 each carry the N6-acetyllysine modification. Residue serine 142 is modified to Phosphoserine. DNA contacts are provided by glycine 227 and histidine 229. A Phosphoserine modification is found at serine 248.

The protein belongs to the TFIIF beta subunit family. In terms of assembly, heterodimer of an alpha and a beta subunit. Interacts with HTATSF1 and URI1. Interacts with GPBP1. Interacts with GTF2B (via N-terminus); this interaction is inhibited in presence of GTF2F1. Part of TBP-based Pol II pre-initiation complex (PIC), in which Pol II core assembles with general transcription factors and other specific initiation factors including GTF2E1, GTF2E2, GTF2F1, GTF2F2, TCEA1, ERCC2, ERCC3, GTF2H2, GTF2H3, GTF2H4, GTF2H5, GTF2A1, GTF2A2, GTF2B and TBP; this large multi-subunit PIC complex mediates DNA unwinding and targets Pol II core to the transcription start site where the first phosphodiester bond forms.

The protein resides in the nucleus. TFIIF is a general transcription initiation factor that binds to RNA polymerase II and helps to recruit it to the initiation complex in collaboration with TFIIB. This is General transcription factor IIF subunit 2 (Gtf2f2) from Mus musculus (Mouse).